Reading from the N-terminus, the 346-residue chain is Holliday junction branch migration complex subunit RuvB (346 aa).

Positions 2 to 183 (TDDRIIGAGA…FGIVQRLEFY (182 aa)) are large ATPase domain (RuvB-L). ATP-binding positions include Ile-22, Arg-23, Gly-64, Lys-67, Thr-68, Thr-69, 130–132 (EDF), Arg-173, Tyr-183, and Arg-220. Mg(2+) is bound at residue Thr-68. The small ATPAse domain (RuvB-S) stretch occupies residues 184–254 (SVEELTRIVR…VAQAAMKMLK (71 aa)). Positions 257–346 (PEGFDELDRR…DLFAEVPDVG (90 aa)) are head domain (RuvB-H). DNA-binding residues include Arg-293, Arg-312, and Arg-317.

Belongs to the RuvB family. In terms of assembly, homohexamer. Forms an RuvA(8)-RuvB(12)-Holliday junction (HJ) complex. HJ DNA is sandwiched between 2 RuvA tetramers; dsDNA enters through RuvA and exits via RuvB. An RuvB hexamer assembles on each DNA strand where it exits the tetramer. Each RuvB hexamer is contacted by two RuvA subunits (via domain III) on 2 adjacent RuvB subunits; this complex drives branch migration. In the full resolvosome a probable DNA-RuvA(4)-RuvB(12)-RuvC(2) complex forms which resolves the HJ.

It is found in the cytoplasm. It carries out the reaction ATP + H2O = ADP + phosphate + H(+). The RuvA-RuvB-RuvC complex processes Holliday junction (HJ) DNA during genetic recombination and DNA repair, while the RuvA-RuvB complex plays an important role in the rescue of blocked DNA replication forks via replication fork reversal (RFR). RuvA specifically binds to HJ cruciform DNA, conferring on it an open structure. The RuvB hexamer acts as an ATP-dependent pump, pulling dsDNA into and through the RuvAB complex. RuvB forms 2 homohexamers on either side of HJ DNA bound by 1 or 2 RuvA tetramers; 4 subunits per hexamer contact DNA at a time. Coordinated motions by a converter formed by DNA-disengaged RuvB subunits stimulates ATP hydrolysis and nucleotide exchange. Immobilization of the converter enables RuvB to convert the ATP-contained energy into a lever motion, pulling 2 nucleotides of DNA out of the RuvA tetramer per ATP hydrolyzed, thus driving DNA branch migration. The RuvB motors rotate together with the DNA substrate, which together with the progressing nucleotide cycle form the mechanistic basis for DNA recombination by continuous HJ branch migration. Branch migration allows RuvC to scan DNA until it finds its consensus sequence, where it cleaves and resolves cruciform DNA. This chain is Holliday junction branch migration complex subunit RuvB, found in Stenotrophomonas maltophilia (strain K279a).